We begin with the raw amino-acid sequence, 157 residues long: Thiocyanate hydrolase subunit beta (157 aa).

Heterododecamer consisting of 4 alpha, 4 beta, and 4 gamma subunits.

It catalyses the reaction thiocyanate + H2O + 2 H(+) = carbonyl sulfide + NH4(+). It participates in organosulfur degradation; thiocyanate degradation. Involved in the degradation of thiocyanate. The chain is Thiocyanate hydrolase subunit beta (scnB) from Thiobacillus thioparus.